We begin with the raw amino-acid sequence, 810 residues long: Glycerol-3-phosphate acyltransferase (810 aa).

Positions 305 to 310 (CHRSHI) match the HXXXXD motif motif.

It belongs to the GPAT/DAPAT family.

The protein resides in the cell inner membrane. It carries out the reaction sn-glycerol 3-phosphate + an acyl-CoA = a 1-acyl-sn-glycero-3-phosphate + CoA. It functions in the pathway phospholipid metabolism; CDP-diacylglycerol biosynthesis; CDP-diacylglycerol from sn-glycerol 3-phosphate: step 1/3. In Haemophilus influenzae (strain PittEE), this protein is Glycerol-3-phosphate acyltransferase.